Here is a 365-residue protein sequence, read N- to C-terminus: Dehydroprecondylocarpine acetate synthase (365 aa).

Residues Cys105, Cys108, Cys111, and Cys119 each coordinate Zn(2+). 2 N-linked (GlcNAc...) asparagine glycosylation sites follow: Asn142 and Asn147. The NADP(+) site is built by Leu194, Gly196, Leu197, Ser216, Thr217, Thr218, Lys221, Leu279, Ala281, Ser303, Ala305, and Arg350.

This sequence belongs to the zinc-containing alcohol dehydrogenase family. In terms of assembly, homodimer. Interaction with catharanthine synthase (CS) and tabersonine synthase (TS). Requires Zn(2+) as cofactor.

The protein resides in the cytoplasm. Its subcellular location is the cytosol. It catalyses the reaction dihydroprecondylocarpine acetate + NADP(+) = precondylocarpine acetate + NADPH + H(+). Its pathway is alkaloid biosynthesis. Component of the seco-iridoid and derivatives monoterpenoid indole alkaloids (MIAs, e.g. vinblastine, catharanthine, tabersonine, vincadifformine, vindoline, vincristine, quinine and strychnine) biosynthesis pathway. Catalyzes the non-canonical 1,4-reduction of an alpha,beta-unsaturated iminium moiety; by contrast with the classic alcohol dehydrogenase mechanism, this reaction does not require a catalytic zinc or proton relay. Converts precondylocarpine acetate to dihydroprecondylocarpine acetate, that is spontaneously converted into dehydrosecodine intermediate, precursor of angryline. May also trigger the non-stereoselective 1,4-reduction reaction at C15 of dehydrosecodine leading to the production of secodine, a precursor of vincadifformine. The protein is Dehydroprecondylocarpine acetate synthase of Catharanthus roseus (Madagascar periwinkle).